Reading from the N-terminus, the 332-residue chain is GTP 3',8-cyclase (332 aa).

The Radical SAM core domain maps to 7–221 (SYDRLHDYVR…FDTCKDNGLA (215 aa)). Arginine 16 provides a ligand contact to GTP. Cysteine 23 and cysteine 27 together coordinate [4Fe-4S] cluster. Tyrosine 29 is an S-adenosyl-L-methionine binding site. Cysteine 30 is a [4Fe-4S] cluster binding site. A GTP-binding site is contributed by arginine 66. Glycine 70 contributes to the S-adenosyl-L-methionine binding site. Position 97 (threonine 97) interacts with GTP. An S-adenosyl-L-methionine-binding site is contributed by serine 121. Lysine 158 contributes to the GTP binding site. Methionine 192 is an S-adenosyl-L-methionine binding site. Residues cysteine 256 and cysteine 259 each contribute to the [4Fe-4S] cluster site. 261–263 (RLR) is a binding site for GTP. A [4Fe-4S] cluster-binding site is contributed by cysteine 273.

The protein belongs to the radical SAM superfamily. MoaA family. Monomer and homodimer. It depends on [4Fe-4S] cluster as a cofactor.

It catalyses the reaction GTP + AH2 + S-adenosyl-L-methionine = (8S)-3',8-cyclo-7,8-dihydroguanosine 5'-triphosphate + 5'-deoxyadenosine + L-methionine + A + H(+). The protein operates within cofactor biosynthesis; molybdopterin biosynthesis. In terms of biological role, catalyzes the cyclization of GTP to (8S)-3',8-cyclo-7,8-dihydroguanosine 5'-triphosphate. The polypeptide is GTP 3',8-cyclase (Lactiplantibacillus plantarum (strain ATCC BAA-793 / NCIMB 8826 / WCFS1) (Lactobacillus plantarum)).